The following is a 185-amino-acid chain: Large ribosomal subunit protein uL16m (185 aa).

This sequence belongs to the universal ribosomal protein uL16 family.

It is found in the mitochondrion. This chain is Large ribosomal subunit protein uL16m (RPL16), found in Oryza sativa subsp. japonica (Rice).